The chain runs to 193 residues: METRCLYLLLVCVLSVNHATADNGSIKKMKMQYTGFPLLKFQICVSUGYRRVFEEYTRVLTQRYPDIRIEGENFLPQPLYRHIASFLSVFKLVVIGLIILGKNPFTYLHIETPGIWLWAQENKIYACTMVFFLSNMIENQCMSTGAFEVTLNDVPVWSKLQSGHLPSMQQLVQILENEMKLSVHMDSLPHRRA.

The signal sequence occupies residues Met1–Ala21. A cross-link (cysteinyl-selenocysteine (Cys-Sec)) is located at residues Cys44 to Sec47. Residue Sec47 is a non-standard amino acid, selenocysteine.

Belongs to the SelWTH family. Selenoprotein T subfamily. Post-translationally, may contain a selenide-sulfide bond between Cys-44 and Sec-47. This bond is speculated to serve as redox-active pair. In terms of tissue distribution, widely expressed in the embryo. High level in embryonic blood at 24 hours post-fertilization (hpf).

Its subcellular location is the endoplasmic reticulum membrane. It catalyses the reaction [thioredoxin]-dithiol + NADP(+) = [thioredoxin]-disulfide + NADPH + H(+). Functionally, selenoprotein with thioredoxin reductase-like oxidoreductase activity. The protein is Thioredoxin reductase-like selenoprotein T1b of Danio rerio (Zebrafish).